The primary structure comprises 274 residues: Diaminopimelate epimerase (274 aa).

Substrate-binding residues include Asn11, Gln44, and Asn64. Cys73 serves as the catalytic Proton donor. Substrate-binding positions include 74–75 (GN), Asn157, Asn190, and 208–209 (ER). The active-site Proton acceptor is Cys217. 218–219 (GS) is a binding site for substrate.

This sequence belongs to the diaminopimelate epimerase family. Homodimer.

It localises to the cytoplasm. It catalyses the reaction (2S,6S)-2,6-diaminopimelate = meso-2,6-diaminopimelate. The protein operates within amino-acid biosynthesis; L-lysine biosynthesis via DAP pathway; DL-2,6-diaminopimelate from LL-2,6-diaminopimelate: step 1/1. Its function is as follows. Catalyzes the stereoinversion of LL-2,6-diaminopimelate (L,L-DAP) to meso-diaminopimelate (meso-DAP), a precursor of L-lysine and an essential component of the bacterial peptidoglycan. In Sodalis glossinidius (strain morsitans), this protein is Diaminopimelate epimerase.